The sequence spans 148 residues: MIDVVEIQKILPHRYPFLLIDRVCELETGKSVYAYKNITIAEQIFEGHFPGHPIYPGVMIIEGMAQAGGILAFKSAEDPSGLSIENKVVYFMSIDRAKFRNPVKPGDKLEYRLEVLKHKGNVWVLDGKAYVDDKLVAEAELKAMIVDK.

Residue His48 is part of the active site.

It belongs to the thioester dehydratase family. FabZ subfamily.

The protein localises to the cytoplasm. It catalyses the reaction a (3R)-hydroxyacyl-[ACP] = a (2E)-enoyl-[ACP] + H2O. In terms of biological role, involved in unsaturated fatty acids biosynthesis. Catalyzes the dehydration of short chain beta-hydroxyacyl-ACPs and long chain saturated and unsaturated beta-hydroxyacyl-ACPs. The protein is 3-hydroxyacyl-[acyl-carrier-protein] dehydratase FabZ of Campylobacter fetus subsp. fetus (strain 82-40).